We begin with the raw amino-acid sequence, 25 residues long: Spinigerin (25 aa).

The protein resides in the secreted. Functionally, active against Gram-positive bacteria B.megaterium and M.luteus, Gram-negative bacteria E.coli SBS363 and D22, K.pneumoniae, S.typhimurium and P.aeruginosa, yeast C.albicans and filamentous fungi F.culmorum, N.crassa, N.hematococca and T.viridae. Inactive against Gram-positive bacteria B.subtilis, S.pyogenes, B.thuringiensis and S.aureus, Gram-negative bacteria E.cloacae and E.carotovora and filamentous fungus B.bassiana. The sequence is that of Spinigerin from Pseudacanthotermes spiniger.